The following is a 288-amino-acid chain: Elongation factor Ts (288 aa).

Residues 82-85 (TDFV) form an involved in Mg(2+) ion dislocation from EF-Tu region.

Belongs to the EF-Ts family.

Its subcellular location is the cytoplasm. Functionally, associates with the EF-Tu.GDP complex and induces the exchange of GDP to GTP. It remains bound to the aminoacyl-tRNA.EF-Tu.GTP complex up to the GTP hydrolysis stage on the ribosome. This Chlorobium chlorochromatii (strain CaD3) protein is Elongation factor Ts.